Reading from the N-terminus, the 382-residue chain is Protein phosphatase 1A (382 aa).

The N-myristoyl glycine moiety is linked to residue glycine 2. One can recognise a PPM-type phosphatase domain in the interval 23-291 (RYGLSSMQGW…DNMSVILICF (269 aa)). Mn(2+) contacts are provided by aspartate 60, glycine 61, aspartate 239, and aspartate 282. Phosphoserine is present on residues serine 375 and serine 377.

This sequence belongs to the PP2C family. In terms of assembly, monomer. Interacts with SMAD2; the interaction dephosphorylates SMAD2 in its C-terminal SXS motif resulting in disruption of the SMAD2/SMAD4 complex, SMAD2 nuclear export and termination of the TGF-beta-mediated signaling. Interacts with SMAD2; the interaction dephosphorylates SMAD2 in its C-terminal SXS motif resulting in disruption of the SMAD2/SMAD4 complex, SMAD2 nuclear export and termination of the TGF-beta-mediated signaling. Interacts with the phosphorylated form of IKBKB/IKKB. It depends on Mg(2+) as a cofactor. The cofactor is Mn(2+). Post-translationally, N-myristoylation is essential for the recognition of its substrates for dephosphorylation.

It localises to the nucleus. The protein localises to the cytoplasm. Its subcellular location is the cytosol. The protein resides in the membrane. It carries out the reaction O-phospho-L-seryl-[protein] + H2O = L-seryl-[protein] + phosphate. The catalysed reaction is O-phospho-L-threonyl-[protein] + H2O = L-threonyl-[protein] + phosphate. Its function is as follows. Enzyme with a broad specificity. Negatively regulates TGF-beta signaling through dephosphorylating SMAD2 and SMAD3, resulting in their dissociation from SMAD4, nuclear export of the SMADs and termination of the TGF-beta-mediated signaling. Dephosphorylates PRKAA1 and PRKAA2. Plays an important role in the termination of TNF-alpha-mediated NF-kappa-B activation through dephosphorylating and inactivating IKBKB/IKKB. The sequence is that of Protein phosphatase 1A (Ppm1a) from Mus musculus (Mouse).